The chain runs to 155 residues: Ribonuclease H (155 aa).

Residues 4–145 form the RNase H type-1 domain; that stretch reads NISKVVIYTD…ADKLAAQGRQ (142 aa). Positions 13, 51, 73, and 137 each coordinate Mg(2+).

The protein belongs to the RNase H family. In terms of assembly, monomer. It depends on Mg(2+) as a cofactor.

The protein localises to the cytoplasm. It catalyses the reaction Endonucleolytic cleavage to 5'-phosphomonoester.. Endonuclease that specifically degrades the RNA of RNA-DNA hybrids. This Rickettsia canadensis (strain McKiel) protein is Ribonuclease H.